The primary structure comprises 466 residues: Transcription factor SOX-10 (466 aa).

5 disordered regions span residues 1-67 (MAEE…DDDK), 160-198 (LRMQ…TDQG), 213-275 (DHRH…DFGN), 355-375 (QVKT…QPST), and 433-466 (RPLY…LSRP). Low complexity predominate over residues 23-32 (LSPSSAPSLG). S24 is modified (phosphoserine). The segment at 62–102 (EADDDKFPVCIREAVSQVLSGYDWTLVPMPVRVNGASKSKP) is dimerization (DIM). A DNA-binding region (HMG box) is located at residues 104-172 (VKRPMNAFMV…QHKKDHPDYK (69 aa)). Basic and acidic residues-rich tracts occupy residues 160 to 173 (LRMQ…DYKY) and 254 to 271 (ADPK…KPHI). A transactivation domain (TAM) region spans residues 228–310 (PEHPSGQSHG…LPPNGHPGHV (83 aa)). The tract at residues 353–466 (KAQVKTETTG…QPVYTTLSRP (114 aa)) is transactivation domain (TAC). The segment covering 440-466 (SDPSPSGPQSHSPTHWEQPVYTTLSRP) has biased composition (polar residues).

In terms of assembly, monomer. Interacts with Armcx3 at the mitochondrial outer membrane surface. Interacts with PAX3. In terms of tissue distribution, predominant expression in glial cells of the nervous system.

The protein localises to the cytoplasm. The protein resides in the nucleus. It is found in the mitochondrion outer membrane. In terms of biological role, transcription factor that plays a central role in developing and mature glia. Specifically activates expression of myelin genes, during oligodendrocyte (OL) maturation, such as DUSP15 and MYRF, thereby playing a central role in oligodendrocyte maturation and CNS myelination. Once induced, MYRF cooperates with SOX10 to implement the myelination program. Transcriptional activator of MITF, acting synergistically with PAX3. Transcriptional activator of MBP, via binding to the gene promoter. The protein is Transcription factor SOX-10 (Sox10) of Rattus norvegicus (Rat).